The sequence spans 64 residues: Insect toxin OsI1 (64 aa).

The LCN-type CS-alpha/beta domain occupies 1–61 (DGYPKQKDGC…MWKYETNTCG (61 aa)). 4 disulfides stabilise this stretch: Cys10–Cys60, Cys14–Cys35, Cys21–Cys42, and Cys25–Cys44. At Gly61 the chain carries Glycine amide.

It belongs to the long (4 C-C) scorpion toxin superfamily. Sodium channel inhibitor family. Beta subfamily. In terms of tissue distribution, expressed by the venom gland.

The protein resides in the secreted. In terms of biological role, depressant insect beta-toxins cause a transient contraction paralysis followed by a slow flaccid paralysis. They bind voltage-independently at site-4 of sodium channels (Nav) and shift the voltage of activation toward more negative potentials thereby affecting sodium channel activation and promoting spontaneous and repetitive firing. This toxin is active only on insects. This is Insect toxin OsI1 from Orthochirus scrobiculosus (Central Asian scorpion).